The chain runs to 274 residues: Large ribosomal subunit protein uL2 (274 aa).

The segment at 224–256 (AMNPIDHPHGGGEGRTGEGRHAVDPWGNLTKGY) is disordered. A compositionally biased stretch (basic and acidic residues) spans 229-246 (DHPHGGGEGRTGEGRHAV).

Belongs to the universal ribosomal protein uL2 family. As to quaternary structure, part of the 50S ribosomal subunit. Forms a bridge to the 30S subunit in the 70S ribosome.

Functionally, one of the primary rRNA binding proteins. Required for association of the 30S and 50S subunits to form the 70S ribosome, for tRNA binding and peptide bond formation. It has been suggested to have peptidyltransferase activity; this is somewhat controversial. Makes several contacts with the 16S rRNA in the 70S ribosome. The polypeptide is Large ribosomal subunit protein uL2 (Acidovorax ebreus (strain TPSY) (Diaphorobacter sp. (strain TPSY))).